A 225-amino-acid polypeptide reads, in one-letter code: Uridylate kinase (225 aa).

9–10 (GS) contacts ATP. A UMP-binding site is contributed by Gly-46. Residues Gly-47 and Arg-51 each contribute to the ATP site. Residues Asp-67 and 115–121 (THPAHTT) each bind UMP. Positions 141, 142, 147, and 150 each coordinate ATP.

The protein belongs to the UMP kinase family. As to quaternary structure, homohexamer.

The protein resides in the cytoplasm. It carries out the reaction UMP + ATP = UDP + ADP. Its pathway is pyrimidine metabolism; CTP biosynthesis via de novo pathway; UDP from UMP (UMPK route): step 1/1. Inhibited by UTP. Catalyzes the reversible phosphorylation of UMP to UDP. In Methanococcus maripaludis (strain C7 / ATCC BAA-1331), this protein is Uridylate kinase.